The primary structure comprises 278 residues: Trehalose monomycolate transport factor A (278 aa).

A topological domain (periplasmic) is located at residue methionine 1. Residues 2 to 22 (VPLWFTLSALCFVGAAVLLYV) form a helical membrane-spanning segment. At 23–278 (DIDRRRGLGR…NGREASHFQR (256 aa)) the chain is on the cytoplasmic side. A disordered region spans residues 200–278 (PPVPQNGSQA…NGREASHFQR (79 aa)). Residues 269–278 (NGREASHFQR) show a composition bias toward basic and acidic residues.

Monomer. Interacts (via N-terminus) with MmpL3; active trehalose monomycolate (TMM) biosynthesis is not required for the complex formation. Interacts with MSMEG_5308.

The protein localises to the cell inner membrane. Its subcellular location is the cell septum. It localises to the cell tip. In terms of biological role, required for MmpL3-dependent trehalose monomycolate (TMM) transport to the cell wall. Required for growth and cell elongation. This Mycolicibacterium smegmatis (strain ATCC 700084 / mc(2)155) (Mycobacterium smegmatis) protein is Trehalose monomycolate transport factor A.